A 224-amino-acid polypeptide reads, in one-letter code: Cell division protein SepF (224 aa).

The segment at 21–78 (DDYYEDDDRGPAPRGYRRPREDRFEDEGYAPRGYDGHPEDRRRDYDEPPAYRAGLAGG) is disordered. Residues 54–66 (YDGHPEDRRRDYD) are compositionally biased toward basic and acidic residues.

The protein belongs to the SepF family. Homodimer. Interacts with FtsZ.

It localises to the cytoplasm. Functionally, cell division protein that is part of the divisome complex and is recruited early to the Z-ring. Probably stimulates Z-ring formation, perhaps through the cross-linking of FtsZ protofilaments. Its function overlaps with FtsA. In Mycolicibacterium gilvum (strain PYR-GCK) (Mycobacterium gilvum (strain PYR-GCK)), this protein is Cell division protein SepF.